The following is a 127-amino-acid chain: Large ribosomal subunit protein bL12 (127 aa).

The protein belongs to the bacterial ribosomal protein bL12 family. Homodimer. Part of the ribosomal stalk of the 50S ribosomal subunit. Forms a multimeric L10(L12)X complex, where L10 forms an elongated spine to which 2 to 4 L12 dimers bind in a sequential fashion. Binds GTP-bound translation factors.

Its function is as follows. Forms part of the ribosomal stalk which helps the ribosome interact with GTP-bound translation factors. Is thus essential for accurate translation. This chain is Large ribosomal subunit protein bL12, found in Rhizobium etli (strain ATCC 51251 / DSM 11541 / JCM 21823 / NBRC 15573 / CFN 42).